The following is a 386-amino-acid chain: 3-hydroxyisobutyryl-CoA hydrolase, mitochondrial (386 aa).

Residues 1-32 (MGLQGLCRLMSRFNSYKRTNIILQHLKMSNHT) constitute a mitochondrion transit peptide. K92 is subject to N6-acetyllysine; alternate. K92 is subject to N6-succinyllysine; alternate. 4 residues coordinate substrate: E121, G146, E169, and D177. K221 carries the post-translational modification N6-acetyllysine; alternate. K221 carries the N6-succinyllysine; alternate modification. The residue at position 234 (S234) is a Phosphoserine. An N6-succinyllysine mark is found at K250 and K257. K297 is modified (N6-acetyllysine; alternate). Residue K297 is modified to N6-succinyllysine; alternate. K301 is modified (N6-succinyllysine). The residue at position 353 (K353) is an N6-acetyllysine; alternate. K353 is modified (N6-succinyllysine; alternate). Residue S356 is modified to Phosphoserine. N6-acetyllysine occurs at positions 360 and 365. K377 carries the post-translational modification N6-succinyllysine.

This sequence belongs to the enoyl-CoA hydratase/isomerase family.

It is found in the mitochondrion. It carries out the reaction 3-hydroxy-2-methylpropanoyl-CoA + H2O = 3-hydroxy-2-methylpropanoate + CoA + H(+). The protein operates within amino-acid degradation; L-valine degradation. Its function is as follows. Hydrolyzes 3-hydroxyisobutyryl-CoA (HIBYL-CoA), a saline catabolite. Has high activity toward isobutyryl-CoA. Could be an isobutyryl-CoA dehydrogenase that functions in valine catabolism. Also hydrolyzes 3-hydroxypropanoyl-CoA. The chain is 3-hydroxyisobutyryl-CoA hydrolase, mitochondrial (HIBCH) from Bos taurus (Bovine).